The chain runs to 108 residues: Competence protein ComGC (108 aa).

Residues 1–13 form the signal peptide; that stretch reads MKKMMTFLKKAKV. Residues 14–39 form a may be involved in polymerization of ComGC region; sequence KAFTLVEMLVVLLIISVLFLLFVPNL. Phenylalanine 16 is subject to N-methylphenylalanine. A helical transmembrane segment spans residues 16-36; that stretch reads FTLVEMLVVLLIISVLFLLFV.

This sequence belongs to the ComGC family. In terms of assembly, the transformation pili are flexible filaments, consisting mainly of the major pilin ComGC and smaller amounts of the minor pilins, including at least ComGD, ComGF and ComGG, and perhaps ComGE. Homodimer. Forms higher-order multimers. Interacts with ComGG; the interaction is probably direct. Post-translationally, undergoes proteolytic cleavage.

Its subcellular location is the cell membrane. It localises to the cell surface. It is found in the fimbrium. The protein resides in the secreted. Major component of the type IV-like pilus (T4P) that plays a role in transformation. Transformation pili are dynamically extended and retracted, perhaps thereby promoting DNA uptake and transformation. Required for transformation. Required for DNA binding. This chain is Competence protein ComGC, found in Streptococcus pneumoniae (strain ATCC BAA-255 / R6).